Here is a 292-residue protein sequence, read N- to C-terminus: MQKYEKLEKIGEGTYGTVFKAKNRDTHEIVALKRVRLDDDDEGVPSSALREICLLKELKHKNIVRLHDVLHSDKKLTLVFEFCDQDLKKYFDSCNGDLDPEIVKSFMYQLLKGLAFCHSRNVLHRDLKPQNLLINRNGELKLADFGLARAFGIPVRCYSAEVVTLWYRPPDVLFGAKLYSTSIDMWSAGCIFAELANAGRPLFPGNDVDDQLKRIFRLLGTPTEEQWPAMTKLPDYKPYPMYPATMSLVNVVPKLNATGRDLLQNLLKCNPVQRICADEALQHPYFADFCPP.

Positions 4–286 (YEKLEKIGEG…ADEALQHPYF (283 aa)) constitute a Protein kinase domain. ATP contacts are provided by residues 10-18 (IGEGTYGTV) and K33. A Phosphothreonine modification is found at T14. Residue Y15 is modified to Phosphotyrosine. T17 is modified (phosphothreonine). A Phosphoserine modification is found at S46. At K56 the chain carries N6-acetyllysine. S72 carries the post-translational modification Phosphoserine. Catalysis depends on D126, which acts as the Proton acceptor. A Phosphoserine modification is found at S159. Y239 carries the post-translational modification Phosphotyrosine.

The protein belongs to the protein kinase superfamily. CMGC Ser/Thr protein kinase family. CDC2/CDKX subfamily.

The protein resides in the nucleus. Its subcellular location is the cytoplasm. The protein localises to the cell membrane. It is found in the perikaryon. It localises to the cell projection. The protein resides in the growth cone. Its subcellular location is the lamellipodium. The protein localises to the postsynaptic density. It catalyses the reaction L-seryl-[protein] + ATP = O-phospho-L-seryl-[protein] + ADP + H(+). The catalysed reaction is L-threonyl-[protein] + ATP = O-phospho-L-threonyl-[protein] + ADP + H(+). In terms of biological role, proline-directed serine/threonine-protein kinase essential for neuronal cell cycle arrest and differentiation and may be involved in apoptotic cell death in neuronal diseases by triggering abortive cell cycle re-entry. Interacts with D1 and D3-type G1 cyclins. Regulates several neuronal development and physiological processes including neuronal survival, migration and differentiation, axonal and neurite growth, synaptogenesis, oligodendrocyte differentiation, synaptic plasticity and neurotransmission, by phosphorylating key proteins. In the mature central nervous system (CNS), regulates neurotransmitter movements by phosphorylating substrates associated with neurotransmitter release and synapse plasticity; synaptic vesicle exocytosis, vesicles fusion with the presynaptic membrane, and endocytosis. May regulate endothelial cell migration and angiogenesis via the modulation of lamellipodia formation. The complex p35/CDK5 may participate in the regulation of the circadian clock. The sequence is that of Cyclin-dependent-like kinase 5 (cdk5) from Xenopus laevis (African clawed frog).